The following is a 469-amino-acid chain: Light-independent protochlorophyllide reductase subunit N (469 aa).

Residues cysteine 24, cysteine 49, and cysteine 109 each coordinate [4Fe-4S] cluster.

This sequence belongs to the BchN/ChlN family. In terms of assembly, protochlorophyllide reductase is composed of three subunits; ChlL, ChlN and ChlB. Forms a heterotetramer of two ChlB and two ChlN subunits. Requires [4Fe-4S] cluster as cofactor.

The enzyme catalyses chlorophyllide a + oxidized 2[4Fe-4S]-[ferredoxin] + 2 ADP + 2 phosphate = protochlorophyllide a + reduced 2[4Fe-4S]-[ferredoxin] + 2 ATP + 2 H2O. The protein operates within porphyrin-containing compound metabolism; chlorophyll biosynthesis (light-independent). Its function is as follows. Component of the dark-operative protochlorophyllide reductase (DPOR) that uses Mg-ATP and reduced ferredoxin to reduce ring D of protochlorophyllide (Pchlide) to form chlorophyllide a (Chlide). This reaction is light-independent. The NB-protein (ChlN-ChlB) is the catalytic component of the complex. This chain is Light-independent protochlorophyllide reductase subunit N, found in Synechocystis sp. (strain ATCC 27184 / PCC 6803 / Kazusa).